The primary structure comprises 657 residues: Pentatricopeptide repeat-containing protein At2g37310 (657 aa).

PPR repeat units lie at residues 21–55 (DGGA…SIKP), 56–86 (DNFL…ITVR), 87–121 (NAFS…SCYS), 128–165 (DSIS…GFDS), 166–196 (DVFV…MSER), 197–232 (DVVS…DFKP), 233–267 (NGVT…HIQM), 268–298 (DLSL…MSEK), 299–333 (DSVT…GLST), 334–364 (WNAM…GSRP), 365–399 (NTVT…GADN), 400–430 (NIYV…CKDR), 431–465 (SLIA…GTKP), 466–501 (DDVT…DIEP), and 502–536 (GVEH…PIAK). The tract at residues 537–612 (VWGALLNGAS…IPGTSWIETE (76 aa)) is type E motif. Residues 613-643 (KGLRSFIAKDSSCERSKEMYEIIEGLVESMS) form a type E(+) motif region.

The protein belongs to the PPR family. PCMP-E subfamily.

In Arabidopsis thaliana (Mouse-ear cress), this protein is Pentatricopeptide repeat-containing protein At2g37310 (PCMP-E49).